Here is a 186-residue protein sequence, read N- to C-terminus: Translation initiation factor IF-3 (186 aa).

Belongs to the IF-3 family. Monomer.

It is found in the cytoplasm. Functionally, IF-3 binds to the 30S ribosomal subunit and shifts the equilibrium between 70S ribosomes and their 50S and 30S subunits in favor of the free subunits, thus enhancing the availability of 30S subunits on which protein synthesis initiation begins. The polypeptide is Translation initiation factor IF-3 (Borreliella afzelii (strain PKo) (Borrelia afzelii)).